Here is a 443-residue protein sequence, read N- to C-terminus: Immediate-early protein ICP-46 homolog (443 aa).

Residues 82 to 110 (EFSEHEQEELKEKMAQLNHCLEDCELDYS) adopt a coiled-coil conformation.

This sequence belongs to the IIV-6 393L family.

This Aedes vexans (Inland floodwater mosquito) protein is Immediate-early protein ICP-46 homolog.